The chain runs to 788 residues: Protocadherin beta-18 (788 aa).

An N-terminal signal peptide occupies residues 1 to 28; the sequence is MEPGKGRAQPTRQVLLFFVFLGGSLVYS. 5 Cadherin domains span residues 29–133, 134–242, 243–347, 348–452, and 453–562; these read ETWS…TPTF, LNNH…APEF, EKPV…PPEI, AMTS…APAF, and TQTS…SPFV. Residues 29–691 lie on the Extracellular side of the membrane; sequence ETWSYSIAEE…AQADSLTVYL (663 aa). Asparagine 169 carries an N-linked (GlcNAc...) asparagine glycan. N-linked (GlcNAc...) asparagine glycans are attached at residues asparagine 419 and asparagine 437. The N-linked (GlcNAc...) asparagine glycan is linked to asparagine 568. Residues 569–672 enclose the Cadherin 6 domain; sequence GSAPCTELVP…LVDGFSQPYL (104 aa). Residues 692–712 traverse the membrane as a helical segment; the sequence is VVALASVSSLFLFSVFLFVAV. At 713 to 788 the chain is on the cytoplasmic side; sequence RLCRRSRAAS…DSDMEKAPPF (76 aa).

The protein localises to the cell membrane. In terms of biological role, potential calcium-dependent cell-adhesion protein. The protein is Protocadherin beta-18 (PCDHB18) of Pan troglodytes (Chimpanzee).